The primary structure comprises 376 residues: Alpha-ketoglutarate-dependent dioxygenase esdpJ (376 aa).

Positions 145 and 147 each coordinate Fe cation. Threonine 202 provides a ligand contact to 2-oxoglutarate. The interval 234–260 (YNQSSQEKKSEIHVEPRGSPNNVGSDL) is disordered. The segment covering 239–249 (QEKKSEIHVEP) has biased composition (basic and acidic residues). Fe cation is bound at residue histidine 335. 2 residues coordinate 2-oxoglutarate: arginine 347 and arginine 351. Residues 354-376 (GVGEQPYLDPESKTRREALGEFN) are disordered. Basic and acidic residues predominate over residues 363–376 (PESKTRREALGEFN).

The protein belongs to the TfdA dioxygenase family. Fe(2+) serves as cofactor.

Functionally, alpha-ketoglutarate-dependent dioxygenas; part of the cluster that mediates the biosynthesis of shearones, diterpenoid pyrones (DPs) which are structurally diverse meroterpenoids consisting of a diterpene linked by a pyrone, and which may exhibit a range of bioactivities. The alpha-ketoglutarate-dependent dioxygenase esdpJ seems not to be involved in this pathway. The molecular scaffold is commonly biosynthesized by a series of enzymes including the non-reducing polyketide synthase (NR-PKS) esdpA that generates an alpha-pyrone; the prenyltransferase esdpC that attaches a geranylgeranyl pyrophosphate (GGPP) produced by the GGPP synthase (GGPPS) esdpD onto the pyrone unit; the FAD-dependent monooxygenase esdpE that converts an olefin on the diterpene unit into an epoxide; and the terpene cyclase esdpB that catalyzes the cyclization reactions to give the molecular backbone shearone A. In the modification steps, esdpF oxidizes the hydroxy group to a ketone at C-3 and esdpG then attaches hydroxy groups at both C-11 and C-12. After that, esdpI hydroxylates at C-20 and esdpH hydroxylates at C-6'. The ether bridge is generated by nucleophilic attack of the hydroxy group at C-20 to the carbonyl carbon at C-3. EsdpH can also functions prior to esdpI. The different combinations of these modification enzymes lead to the production of diverse shearone derivatives, shearone I being the end product of the pathway. In Penicillium shearii (Eupenicillium shearii), this protein is Alpha-ketoglutarate-dependent dioxygenase esdpJ.